The following is a 151-amino-acid chain: Transmembrane protein 239 (151 aa).

A run of 3 helical transmembrane segments spans residues 61–81, 85–105, and 116–138; these read LWGL…HALF, SYLL…LLPA, and ALLF…GLLT.

The protein localises to the membrane. This is Transmembrane protein 239 (Tmem239) from Mus musculus (Mouse).